A 174-amino-acid chain; its full sequence is Adenylosuccinate synthetase (174 aa).

GTP-binding positions include 13–19 and 41–43; these read GDEGKGK and GHT. Aspartate 14 acts as the Proton acceptor in catalysis. The Mg(2+) site is built by aspartate 14 and glycine 41. IMP contacts are provided by residues 14 to 17, 39 to 42, threonine 130, and arginine 144; these read DEGK and NAGH. The Proton donor role is filled by histidine 42.

The protein belongs to the adenylosuccinate synthetase family. Homodimer. Mg(2+) serves as cofactor.

Its subcellular location is the cytoplasm. It catalyses the reaction IMP + L-aspartate + GTP = N(6)-(1,2-dicarboxyethyl)-AMP + GDP + phosphate + 2 H(+). It functions in the pathway purine metabolism; AMP biosynthesis via de novo pathway; AMP from IMP: step 1/2. Its function is as follows. Plays an important role in the de novo pathway of purine nucleotide biosynthesis. Catalyzes the first committed step in the biosynthesis of AMP from IMP. The polypeptide is Adenylosuccinate synthetase (Stutzerimonas stutzeri (Pseudomonas stutzeri)).